The sequence spans 350 residues: Probable poly-beta-1,6-N-acetyl-D-glucosamine export protein (350 aa).

Helical transmembrane passes span 8 to 28, 40 to 60, 83 to 103, 119 to 139, 146 to 166, 182 to 202, 216 to 236, 254 to 274, 276 to 296, and 308 to 328; these read LVYL…LTQI, LVLQ…FIIL, YILI…SLLT, QWYG…YIIF, FNSK…LYYF, LSEN…AYMG, LVIM…LANG, IMFI…FNTI, MISA…DSLF, and VFLA…GMIL.

It belongs to the acyltransferase 3 family.

The protein localises to the cell membrane. Presumably involved in the export of the biofilm adhesin polysaccharide poly-beta-1,6-N-acetyl-D-glucosamine (PNAG, also referred to as PIA) across the cell membrane. This is Probable poly-beta-1,6-N-acetyl-D-glucosamine export protein (icaC) from Staphylococcus aureus (strain NCTC 8325 / PS 47).